A 397-amino-acid polypeptide reads, in one-letter code: MNYAYPDEKGHYGIYGGRYVPETLMQSVLELEEAYKEAMEDEAFQKELNHYLNTYVGRETPLYFAENMTEYCGGAKIYLKREDLNHTGAHKINNTIGQALLAVRMGKKKVVAETGAGQHGVATATVCALLGLECVIFMGEEDVRRQKLNVFRMELLGAKVESVAAGSGTLKDAVNEALRYWVSHVHDTHYIMGSVLGPHPFPQIVRDFQSVIGNETKKQYEELEGKLPEAVVACIGGGSNAMGMFYPFVHDEEVALYGVEAAGKGVHTEKHAATLTKGSVGVLHGSMMYLLQNEEGQIQEAHSISAGLDYPGVGPEHSLLKDIGRVSYHSITDDEALEAFQLLTKKEGIIPALESSHAVAYALKLAPQMKEDEGLVICLSGRGDKDVESIKRYMEEV.

Lys-91 carries the post-translational modification N6-(pyridoxal phosphate)lysine.

The protein belongs to the TrpB family. Tetramer of two alpha and two beta chains. The cofactor is pyridoxal 5'-phosphate.

The enzyme catalyses (1S,2R)-1-C-(indol-3-yl)glycerol 3-phosphate + L-serine = D-glyceraldehyde 3-phosphate + L-tryptophan + H2O. It functions in the pathway amino-acid biosynthesis; L-tryptophan biosynthesis; L-tryptophan from chorismate: step 5/5. Functionally, the beta subunit is responsible for the synthesis of L-tryptophan from indole and L-serine. The chain is Tryptophan synthase beta chain from Bacillus thuringiensis (strain Al Hakam).